Here is a 296-residue protein sequence, read N- to C-terminus: Light-independent protochlorophyllide reductase iron-sulfur ATP-binding protein (296 aa).

ATP contacts are provided by residues 39–44 (GIGKST) and Lys68. Ser43 is a binding site for Mg(2+). Positions 124 and 158 each coordinate [4Fe-4S] cluster. Residue 209-210 (NR) coordinates ATP.

It belongs to the NifH/BchL/ChlL family. As to quaternary structure, homodimer. Protochlorophyllide reductase is composed of three subunits; ChlL, ChlN and ChlB. [4Fe-4S] cluster serves as cofactor.

It carries out the reaction chlorophyllide a + oxidized 2[4Fe-4S]-[ferredoxin] + 2 ADP + 2 phosphate = protochlorophyllide a + reduced 2[4Fe-4S]-[ferredoxin] + 2 ATP + 2 H2O. Its pathway is porphyrin-containing compound metabolism; chlorophyll biosynthesis (light-independent). Its function is as follows. Component of the dark-operative protochlorophyllide reductase (DPOR) that uses Mg-ATP and reduced ferredoxin to reduce ring D of protochlorophyllide (Pchlide) to form chlorophyllide a (Chlide). This reaction is light-independent. The L component serves as a unique electron donor to the NB-component of the complex, and binds Mg-ATP. The protein is Light-independent protochlorophyllide reductase iron-sulfur ATP-binding protein of Prochlorococcus marinus (strain MIT 9211).